Consider the following 208-residue polypeptide: Coiled-coil domain-containing protein 25 (208 aa).

Topologically, residues 1–105 (MVFYFTSSSV…SNLKKTADMD (105 aa)) are extracellular. Residues 21 to 25 (KDKYE) are DNA-binding. Lysine 23 carries the N6-acetyllysine modification. A helical transmembrane segment spans residues 106–122 (VGQIGFHRQKDVKIVTV). The stretch at 117 to 187 (VKIVTVEKKV…REMDELRSYS (71 aa)) forms a coiled coil. Topologically, residues 123 to 208 (EKKVNEILNR…QDGNDSDEFM (86 aa)) are cytoplasmic. Over residues 145–184 (EAEKECRDHEERNEKKAQIQEMKRREKEEMKKKREMDELR) the composition is skewed to basic and acidic residues. The interval 145 to 208 (EAEKECRDHE…QDGNDSDEFM (64 aa)) is disordered. Residue serine 204 is modified to Phosphoserine.

It belongs to the CCDC25 family. As to quaternary structure, interacts (via cytoplasmic region) with ILK.

The protein localises to the cell membrane. Its subcellular location is the endomembrane system. In terms of biological role, transmembrane receptor that senses neutrophil extracellular traps (NETs) and triggers the ILK-PARVB pathway to enhance cell motility. NETs are mainly composed of DNA fibers and are released by neutrophils to bind pathogens during inflammation. Formation of NETs is also associated with cancer metastasis, NET-DNA acting as a chemotactic factor to attract cancer cells. Specifically binds NETs on its extracellular region, in particular the 8-OHdG-enriched DNA present in NETs, and recruits ILK, initiating the ILK-PARVB cascade to induce cytoskeleton rearrangement and directional migration of cells. This is Coiled-coil domain-containing protein 25 from Bos taurus (Bovine).